The following is a 121-amino-acid chain: Dihydroneopterin aldolase (121 aa).

The substrate site is built by Glu-16 and Met-111.

The protein belongs to the archaeal dihydroneopterin aldolase family. Homotetramer.

The enzyme catalyses 7,8-dihydroneopterin = 6-hydroxymethyl-7,8-dihydropterin + glycolaldehyde. The protein operates within cofactor biosynthesis; 5,6,7,8-tetrahydromethanopterin biosynthesis. In terms of biological role, catalyzes the conversion of 7,8-dihydroneopterin (H2Neo) to 6-hydroxymethyl-7,8-dihydropterin (6-HMD). The polypeptide is Dihydroneopterin aldolase (Methanopyrus kandleri (strain AV19 / DSM 6324 / JCM 9639 / NBRC 100938)).